A 194-amino-acid polypeptide reads, in one-letter code: Imidazoleglycerol-phosphate dehydratase (194 aa).

It belongs to the imidazoleglycerol-phosphate dehydratase family.

Its subcellular location is the cytoplasm. It carries out the reaction D-erythro-1-(imidazol-4-yl)glycerol 3-phosphate = 3-(imidazol-4-yl)-2-oxopropyl phosphate + H2O. It participates in amino-acid biosynthesis; L-histidine biosynthesis; L-histidine from 5-phospho-alpha-D-ribose 1-diphosphate: step 6/9. In Listeria monocytogenes serotype 4a (strain HCC23), this protein is Imidazoleglycerol-phosphate dehydratase.